A 364-amino-acid polypeptide reads, in one-letter code: Protein PTOV1 homolog (364 aa).

Residues 187 to 207 (AKRKPGVKTPKQPQPEEPPPV) form a disordered region.

It belongs to the Mediator complex subunit 25 family. PTOV1 subfamily.

In Drosophila melanogaster (Fruit fly), this protein is Protein PTOV1 homolog.